Reading from the N-terminus, the 435-residue chain is Elongation factor 1-alpha (435 aa).

The tr-type G domain maps to 4–229; the sequence is KPHLNLIVIG…DQLEIPPKPV (226 aa). Positions 13–20 are G1; that stretch reads GHVDHGKS. 13 to 20 lines the GTP pocket; the sequence is GHVDHGKS. Ser20 provides a ligand contact to Mg(2+). Residues 69–73 form a G2 region; sequence GVTIN. Residues 90–93 are G3; it reads DAPG. GTP is bound by residues 90 to 94 and 152 to 155; these read DAPGH and NKMD. Positions 152–155 are G4; it reads NKMD. A G5 region spans residues 193-195; sequence VAP.

This sequence belongs to the TRAFAC class translation factor GTPase superfamily. Classic translation factor GTPase family. EF-Tu/EF-1A subfamily.

It is found in the cytoplasm. The catalysed reaction is GTP + H2O = GDP + phosphate + H(+). Its function is as follows. GTP hydrolase that promotes the GTP-dependent binding of aminoacyl-tRNA to the A-site of ribosomes during protein biosynthesis. This Sulfolobus acidocaldarius (strain ATCC 33909 / DSM 639 / JCM 8929 / NBRC 15157 / NCIMB 11770) protein is Elongation factor 1-alpha.